The primary structure comprises 331 residues: Aldo-keto reductase family 7 member A3 (331 aa).

Ser-6 is modified (phosphoserine). Met-17, Asp-44, and Tyr-49 together coordinate NADPH. Tyr-49 (proton donor) is an active-site residue. Position 85 is a phosphoserine (Ser-85). The NADPH site is built by His-113, Ser-143, Asn-144, Asn-198, Leu-200, Gly-202, Lys-208, Tyr-209, and Arg-222. The residue at position 227 (Thr-227) is a Phosphothreonine. NADPH is bound by residues Ser-290, Gln-294, and Asn-298.

It belongs to the aldo/keto reductase family. Aldo/keto reductase 2 subfamily. In terms of assembly, homodimer. Expressed in colon, kidney, liver, pancreas, adenocarcinoma and endometrium.

The protein localises to the cytoplasm. The enzyme catalyses a primary alcohol + NADP(+) = an aldehyde + NADPH + H(+). It carries out the reaction aflatoxin B1 dialdehyde + NADPH + H(+) = aflatoxin B1 C(6a)-monoaldehyde + NADP(+). The catalysed reaction is aflatoxin B1 dialdehyde + NADPH + H(+) = aflatoxin B1 C(8)-monoaldehyde + NADP(+). It catalyses the reaction aflatoxin B1 C(6a)-monoaldehyde + NADPH + 2 H(+) = aflatoxin B1 triol + NADP(+). With respect to regulation, inhibited by citrate. Catalyzes the NADPH-dependent reduction of various carbonyl-containing compounds, including aldehydes, ketones, and toxic products from cellular metabolism or environmental exposure. Can reduce the dialdehyde form of aflatoxin B1 (AFB1) into alcohol derivatives, via monoaldehydes intermediates. Can reduce the dialdehyde form of aflatoxin B1 (AFB1) into alcohol derivatives, via monoaldehydes intermediates, thus preventing the formation of protein adducts that contribute to AFB1-induced toxicity. This chain is Aldo-keto reductase family 7 member A3, found in Homo sapiens (Human).